Reading from the N-terminus, the 367-residue chain is MNARIRVAVVYGGRSSEHAISCVSAGSILRNLDPDRFEVTAVGITPEGSWVLTEGRPETLAITDGKLPGVTGDSGTALTLTADPARRGQLVSLGEAAGEVLASADVVFPVLHGPYGEDGTIQGLLELAGVPYVGAGVLASAAGMDKEFTKKLLASAGLPVGDHVVLRARDSTLSLQDRERLGLPVFVKPSRGGSSIGVSRVTAWDELPAAIELARRHDPKVIIEAAVPGRELECGVLEFPDGHLEASTLGEIRVEGVRGREDGFYDFETKYLDDGAELDVPAKVDDDVAEAIRALSLRAFTAIDCQGLARVDFFLTDDGPVINEINTMPGFTTISMYPRMWAASGVDYPTLLATMVETALARGTGLR.

Positions 150–357 constitute an ATP-grasp domain; it reads KKLLASAGLP…YPTLLATMVE (208 aa). 178-233 is an ATP binding site; the sequence is RERLGLPVFVKPSRGGSSIGVSRVTAWDELPAAIELARRHDPKVIIEAAVPGRELE. Mg(2+)-binding residues include aspartate 312, glutamate 324, and asparagine 326.

The protein belongs to the D-alanine--D-alanine ligase family. The cofactor is Mg(2+). It depends on Mn(2+) as a cofactor.

The protein localises to the cytoplasm. The catalysed reaction is 2 D-alanine + ATP = D-alanyl-D-alanine + ADP + phosphate + H(+). It functions in the pathway cell wall biogenesis; peptidoglycan biosynthesis. In terms of biological role, cell wall formation. This Mycolicibacterium gilvum (strain PYR-GCK) (Mycobacterium gilvum (strain PYR-GCK)) protein is D-alanine--D-alanine ligase.